We begin with the raw amino-acid sequence, 127 residues long: Aspartate 1-decarboxylase (127 aa).

The active-site Schiff-base intermediate with substrate; via pyruvic acid is the serine 25. Pyruvic acid (Ser) is present on serine 25. Threonine 57 is a binding site for substrate. The active-site Proton donor is tyrosine 58. Residue glycine 73 to alanine 75 coordinates substrate.

This sequence belongs to the PanD family. Heterooctamer of four alpha and four beta subunits. The cofactor is pyruvate. In terms of processing, is synthesized initially as an inactive proenzyme, which is activated by self-cleavage at a specific serine bond to produce a beta-subunit with a hydroxyl group at its C-terminus and an alpha-subunit with a pyruvoyl group at its N-terminus.

The protein localises to the cytoplasm. It catalyses the reaction L-aspartate + H(+) = beta-alanine + CO2. It participates in cofactor biosynthesis; (R)-pantothenate biosynthesis; beta-alanine from L-aspartate: step 1/1. Functionally, catalyzes the pyruvoyl-dependent decarboxylation of aspartate to produce beta-alanine. The sequence is that of Aspartate 1-decarboxylase from Clostridium botulinum (strain ATCC 19397 / Type A).